Consider the following 241-residue polypeptide: Ribosomal RNA small subunit methyltransferase J (241 aa).

S-adenosyl-L-methionine-binding positions include 94 to 95 (RD) and Asp-163.

It belongs to the methyltransferase superfamily. RsmJ family.

The protein localises to the cytoplasm. It catalyses the reaction guanosine(1516) in 16S rRNA + S-adenosyl-L-methionine = N(2)-methylguanosine(1516) in 16S rRNA + S-adenosyl-L-homocysteine + H(+). Its function is as follows. Specifically methylates the guanosine in position 1516 of 16S rRNA. In Francisella tularensis subsp. novicida (strain U112), this protein is Ribosomal RNA small subunit methyltransferase J.